We begin with the raw amino-acid sequence, 1700 residues long: uncharacterized protein (1700 aa).

A helical transmembrane segment spans residues Ala-986–Val-1006. Coiled coils occupy residues Asp-1246–Lys-1278 and Gln-1657–Asp-1684. The interval Asp-1650–Glu-1700 is disordered. Residues Thr-1651 to Glu-1700 show a composition bias toward acidic residues.

It is found in the host membrane. The protein resides in the virion. This is an uncharacterized protein from Acanthamoeba polyphaga (Amoeba).